The chain runs to 154 residues: Endoribonuclease YbeY (154 aa).

Zn(2+)-binding residues include histidine 114, histidine 118, and histidine 124.

Belongs to the endoribonuclease YbeY family. Requires Zn(2+) as cofactor.

It is found in the cytoplasm. Single strand-specific metallo-endoribonuclease involved in late-stage 70S ribosome quality control and in maturation of the 3' terminus of the 16S rRNA. This Histophilus somni (strain 129Pt) (Haemophilus somnus) protein is Endoribonuclease YbeY.